The sequence spans 156 residues: 6,7-dimethyl-8-ribityllumazine synthase (156 aa).

Residues Phe-22, 57–59 (AYE), and 81–83 (TVI) each bind 5-amino-6-(D-ribitylamino)uracil. A (2S)-2-hydroxy-3-oxobutyl phosphate-binding site is contributed by 86–87 (GT). His-89 functions as the Proton donor in the catalytic mechanism. Phe-114 serves as a coordination point for 5-amino-6-(D-ribitylamino)uracil. Arg-128 contributes to the (2S)-2-hydroxy-3-oxobutyl phosphate binding site.

The protein belongs to the DMRL synthase family. In terms of assembly, forms an icosahedral capsid composed of 60 subunits, arranged as a dodecamer of pentamers.

It catalyses the reaction (2S)-2-hydroxy-3-oxobutyl phosphate + 5-amino-6-(D-ribitylamino)uracil = 6,7-dimethyl-8-(1-D-ribityl)lumazine + phosphate + 2 H2O + H(+). Its pathway is cofactor biosynthesis; riboflavin biosynthesis; riboflavin from 2-hydroxy-3-oxobutyl phosphate and 5-amino-6-(D-ribitylamino)uracil: step 1/2. In terms of biological role, catalyzes the formation of 6,7-dimethyl-8-ribityllumazine by condensation of 5-amino-6-(D-ribitylamino)uracil with 3,4-dihydroxy-2-butanone 4-phosphate. This is the penultimate step in the biosynthesis of riboflavin. The sequence is that of 6,7-dimethyl-8-ribityllumazine synthase from Edwardsiella ictaluri (strain 93-146).